The primary structure comprises 111 residues: MSYPVTSQPQSASTCYQTQLSDWHTGLTDCCNDMPVCLCGTFAPLCLACRISDDFGECCCTPYLPGGLHSLRTGMRERYRIQGSIGKDWAALTFCLPCALCQMARELKIRE.

The protein belongs to the cornifelin family. Directly or indirectly cross-linked to CE proteins loricin and involucrin (IVL).

It is found in the cytoplasm. Its function is as follows. Part of the insoluble cornified cell envelope (CE) of stratified squamous epithelia. The protein is Cornifelin (CNFN) of Bos taurus (Bovine).